The following is a 117-amino-acid chain: Nuclear transition protein 2 (117 aa).

The disordered stretch occupies residues 1 to 117; that stretch reads MDTKMQSLPT…KRRSSGRRYK (117 aa). The segment covering 7 to 26 has biased composition (low complexity); that stretch reads SLPTTHPHPHSSSRPQSHTS. 8 residues coordinate Zn(2+): His12, His14, His16, His24, Cys32, Cys34, Cys38, and Cys41. Low complexity predominate over residues 44 to 53; it reads AGHAGSSSSP. Composition is skewed to basic residues over residues 60–77 and 93–117; these read KHPK…RPSH and SKRK…RRYK. The Nuclear localization signal motif lies at 90–98; the sequence is GKVSKRKAV. Position 112 is a phosphoserine (Ser112).

It belongs to the nuclear transition protein 2 family.

The protein localises to the nucleus. Its subcellular location is the chromosome. Functionally, plays a key role in the replacement of histones to protamine in the elongating spermatids of mammals. In condensing spermatids, loaded onto the nucleosomes, where it promotes the recruitment and processing of protamines, which are responsible for histone eviction. The histone H2AB1-H2BC1/TH2B dimer is required for loading of TNP2 onto chromatin. This is Nuclear transition protein 2 from Mus musculus (Mouse).